The chain runs to 437 residues: F-box protein At3g62430 (437 aa).

The F-box domain maps to 1–49; that stretch reads MDRISNLPDGVIYRVISLLSTKEATCLKYTSKNWLNLVTIIPIAVFVDS.

The chain is F-box protein At3g62430 from Arabidopsis thaliana (Mouse-ear cress).